The chain runs to 81 residues: Small ribosomal subunit protein bS18 (81 aa).

This sequence belongs to the bacterial ribosomal protein bS18 family. In terms of assembly, part of the 30S ribosomal subunit. Forms a tight heterodimer with protein bS6.

Its function is as follows. Binds as a heterodimer with protein bS6 to the central domain of the 16S rRNA, where it helps stabilize the platform of the 30S subunit. In Leptospira borgpetersenii serovar Hardjo-bovis (strain JB197), this protein is Small ribosomal subunit protein bS18.